We begin with the raw amino-acid sequence, 212 residues long: Endonuclease III (212 aa).

In terms of domain architecture, HhH spans F108–N127. 4 residues coordinate [4Fe-4S] cluster: C187, C194, C197, and C203.

It belongs to the Nth/MutY family. Requires [4Fe-4S] cluster as cofactor.

The enzyme catalyses 2'-deoxyribonucleotide-(2'-deoxyribose 5'-phosphate)-2'-deoxyribonucleotide-DNA = a 3'-end 2'-deoxyribonucleotide-(2,3-dehydro-2,3-deoxyribose 5'-phosphate)-DNA + a 5'-end 5'-phospho-2'-deoxyribonucleoside-DNA + H(+). DNA repair enzyme that has both DNA N-glycosylase activity and AP-lyase activity. The DNA N-glycosylase activity releases various damaged pyrimidines from DNA by cleaving the N-glycosidic bond, leaving an AP (apurinic/apyrimidinic) site. The AP-lyase activity cleaves the phosphodiester bond 3' to the AP site by a beta-elimination, leaving a 3'-terminal unsaturated sugar and a product with a terminal 5'-phosphate. The polypeptide is Endonuclease III (Rickettsia prowazekii (strain Madrid E)).